Here is a 256-residue protein sequence, read N- to C-terminus: Small ribosomal subunit protein uS2 (256 aa).

This sequence belongs to the universal ribosomal protein uS2 family.

The chain is Small ribosomal subunit protein uS2 from Streptococcus agalactiae serotype III (strain NEM316).